Consider the following 497-residue polypeptide: Inactive metallocarboxypeptidase ecm14 (497 aa).

The first 28 residues, 1–28 (MAYNKSLKSLVFILLASQIVFVLFLCYG), serve as a signal peptide directing secretion. Positions 29–148 (KSSRELGVKW…TLFESIVPDT (120 aa)) are excised as a propeptide. The 311-residue stretch at 182–492 (SYQNLESINS…AMILYYGEFI (311 aa)) folds into the Peptidase M14 domain. Residues H248 and E251 each contribute to the Zn(2+) site. Residues 248-251 (HARE) and 323-324 (DA) contribute to the substrate site. Cysteines 317 and 337 form a disulfide. Zn(2+) is bound at residue H377. A substrate-binding site is contributed by 378–379 (SY).

Belongs to the peptidase M14 family. Zn(2+) is required as a cofactor.

The protein resides in the endoplasmic reticulum. The protein localises to the secreted. In terms of biological role, inactive carboxypeptidase that may play a role in cell wall organization and biogenesis. The protein is Inactive metallocarboxypeptidase ecm14 of Schizosaccharomyces pombe (strain 972 / ATCC 24843) (Fission yeast).